The primary structure comprises 197 residues: Protein FAM219B (197 aa).

Disordered stretches follow at residues 1 to 77 (MATE…HRDH) and 117 to 142 (DENLVSLDSDSDGELESRYSSGYSSA). A phosphoserine mark is found at Ser-14, Ser-125, and Ser-127.

It belongs to the FAM219 family.

This Mus musculus (Mouse) protein is Protein FAM219B (Fam219b).